Here is a 158-residue protein sequence, read N- to C-terminus: NADH-quinone oxidoreductase subunit B (158 aa).

[4Fe-4S] cluster-binding residues include cysteine 37, cysteine 38, cysteine 102, and cysteine 132.

Belongs to the complex I 20 kDa subunit family. NDH-1 is composed of 14 different subunits. Subunits NuoB, C, D, E, F, and G constitute the peripheral sector of the complex. The cofactor is [4Fe-4S] cluster.

Its subcellular location is the cell inner membrane. It catalyses the reaction a quinone + NADH + 5 H(+)(in) = a quinol + NAD(+) + 4 H(+)(out). In terms of biological role, NDH-1 shuttles electrons from NADH, via FMN and iron-sulfur (Fe-S) centers, to quinones in the respiratory chain. Couples the redox reaction to proton translocation (for every two electrons transferred, four hydrogen ions are translocated across the cytoplasmic membrane), and thus conserves the redox energy in a proton gradient. This Methylobacillus flagellatus (strain ATCC 51484 / DSM 6875 / VKM B-1610 / KT) protein is NADH-quinone oxidoreductase subunit B.